We begin with the raw amino-acid sequence, 206 residues long: LexA repressor (206 aa).

The H-T-H motif DNA-binding region spans 28–48 (RAEIATRLGFKSANAAEEHLK). Active-site for autocatalytic cleavage activity residues include serine 123 and lysine 160.

It belongs to the peptidase S24 family. Homodimer.

The enzyme catalyses Hydrolysis of Ala-|-Gly bond in repressor LexA.. In terms of biological role, represses a number of genes involved in the response to DNA damage (SOS response), including recA and lexA. In the presence of single-stranded DNA, RecA interacts with LexA causing an autocatalytic cleavage which disrupts the DNA-binding part of LexA, leading to derepression of the SOS regulon and eventually DNA repair. The polypeptide is LexA repressor (Shewanella putrefaciens (strain CN-32 / ATCC BAA-453)).